The primary structure comprises 230 residues: Peptidyl-prolyl cis-trans isomerase Mip (230 aa).

The first 21 residues, 1–21 (MKRLILPFLSVGLLLGTTAHA), serve as a signal peptide directing secretion. In terms of domain architecture, PPIase FKBP-type spans 142–230 (NDEVTVNYEG…KVNLISVKKK (89 aa)).

It belongs to the FKBP-type PPIase family.

Its subcellular location is the secreted. It carries out the reaction [protein]-peptidylproline (omega=180) = [protein]-peptidylproline (omega=0). May be an essential virulence factor associated with macrophage infectivity. Exhibits PPIase activity. The chain is Peptidyl-prolyl cis-trans isomerase Mip (mip) from Coxiella burnetii (strain RSA 493 / Nine Mile phase I).